The chain runs to 248 residues: Proteasome subunit alpha (248 aa).

Serine 2 bears the N-acetylserine; partial mark.

This sequence belongs to the peptidase T1A family. The 20S proteasome core is composed of 14 alpha and 14 beta subunits that assemble into four stacked heptameric rings, resulting in a barrel-shaped structure. The two inner rings, each composed of seven catalytic beta subunits, are sandwiched by two outer rings, each composed of seven alpha subunits. The catalytic chamber with the active sites is on the inside of the barrel. Has a gated structure, the ends of the cylinder being occluded by the N-termini of the alpha-subunits. Is capped by the proteasome-associated ATPase, ARC.

It localises to the cytoplasm. It participates in protein degradation; proteasomal Pup-dependent pathway. With respect to regulation, the formation of the proteasomal ATPase ARC-20S proteasome complex, likely via the docking of the C-termini of ARC into the intersubunit pockets in the alpha-rings, may trigger opening of the gate for substrate entry. Interconversion between the open-gate and close-gate conformations leads to a dynamic regulation of the 20S proteasome proteolysis activity. Component of the proteasome core, a large protease complex with broad specificity involved in protein degradation. This Mycobacterium tuberculosis (strain CDC 1551 / Oshkosh) protein is Proteasome subunit alpha.